We begin with the raw amino-acid sequence, 210 residues long: Riboflavin kinase (210 aa).

The tract at residues 1–81 (MECRERRLAA…DLLRYFNIAS (81 aa)) is H-T-H motif-like. The segment at 82–210 (IRLVGRVVSG…GDVVEVEVLL (129 aa)) is riboflavin kinase. 91–96 (GLGEGA) provides a ligand contact to CDP. The Mg(2+) site is built by Thr-120 and Asn-122. FMN contacts are provided by Thr-177 and Glu-185. CDP is bound at residue 190 to 193 (VKLR).

It belongs to the archaeal riboflavin kinase family. Requires Mg(2+) as cofactor.

The enzyme catalyses riboflavin + CTP = CDP + FMN + H(+). The protein operates within cofactor biosynthesis; FMN biosynthesis; FMN from riboflavin (CTP route): step 1/1. Functionally, catalyzes the CTP-dependent phosphorylation of riboflavin (vitamin B2) to form flavin mononucleotide (FMN). This chain is Riboflavin kinase (ribK), found in Pyrobaculum arsenaticum (strain DSM 13514 / JCM 11321 / PZ6).